Consider the following 513-residue polypeptide: Xylose import ATP-binding protein XylG (513 aa).

2 consecutive ABC transporter domains span residues 5-242 (LEMK…VGRE) and 259-505 (LRVE…LRSE). 37–44 (GENGSGKS) contacts ATP.

It belongs to the ABC transporter superfamily. Xylose importer (TC 3.A.1.2.4) family. As to quaternary structure, the complex is composed of two ATP-binding proteins (XylG), two transmembrane proteins (XylH) and a solute-binding protein (XylF).

It is found in the cell inner membrane. It carries out the reaction D-xylose(out) + ATP + H2O = D-xylose(in) + ADP + phosphate + H(+). In terms of biological role, part of the ABC transporter complex XylFGH involved in xylose import. Responsible for energy coupling to the transport system. The polypeptide is Xylose import ATP-binding protein XylG (Pectobacterium atrosepticum (strain SCRI 1043 / ATCC BAA-672) (Erwinia carotovora subsp. atroseptica)).